The sequence spans 633 residues: Probably inactive receptor-like protein kinase At2g46850 (633 aa).

An N-terminal signal peptide occupies residues 1 to 28; the sequence is MPPLFLPSSSSALFLLLLLLLTLQTLTS. At 29–285 the chain is on the extracellular side; it reads ISLSQPQALR…IKKHNGKKLT (257 aa). 3 N-linked (GlcNAc...) asparagine glycosylation sites follow: Asn-45, Asn-69, and Asn-231. The chain crosses the membrane as a helical span at residues 286 to 306; the sequence is VLAGVLAPLFILGSLLALFCL. Residues 307–633 are Cytoplasmic-facing; the sequence is LKRPVTSHKD…SPDSIYLPKT (327 aa). Residues 355–633 form the Protein kinase domain; the sequence is FQDSQKLTQG…SPDSIYLPKT (279 aa). ATP-binding positions include 361-369 and Lys-384; that span reads LTQGKTGTI.

It belongs to the protein kinase superfamily. Ser/Thr protein kinase family.

The protein resides in the membrane. The sequence is that of Probably inactive receptor-like protein kinase At2g46850 from Arabidopsis thaliana (Mouse-ear cress).